Reading from the N-terminus, the 411-residue chain is Serpin A3-5 (411 aa).

Residues 1–24 (MRAERTSFLLALGLLMAGIRSVHC) form the signal peptide. 5 N-linked (GlcNAc...) asparagine glycosylation sites follow: asparagine 100, asparagine 180, asparagine 230, asparagine 264, and asparagine 318.

This sequence belongs to the serpin family. Homodimer.

Its subcellular location is the cytoplasmic vesicle. It is found in the secretory vesicle. The protein localises to the chromaffin granule. It localises to the secreted. Its function is as follows. Serine protease inhibitor. The protein is Serpin A3-5 of Bos taurus (Bovine).